Here is a 309-residue protein sequence, read N- to C-terminus: Caspase-7 (309 aa).

A propeptide spans 1–24 (MSGDQHADRSSGEKSNGDQDDTVD) (N-terminally processed). Over residues 1–31 (MSGDQHADRSSGEKSNGDQDDTVDAKPDRSS) the composition is skewed to basic and acidic residues. Residues 1 to 53 (MSGDQHADRSSGEKSNGDQDDTVDAKPDRSSRLSLFAKKKKNGEEEQPKSSLS) form a disordered region. An exosite region spans residues 39–42 (KKKN). The segment at 81 to 92 (KNFEDKTGMGTR) is loop L1. Active-site residues include H149 and C191. A loop L2 region spans residues 192–201 (RGSEFDEGIQ). The propeptide occupies 204 to 214 (SGPANDTLETD). A loop L3 region spans residues 234 to 246 (VPGYYSWRNPGRG). Positions 282–296 (ESQSDDPRFSEKKQI) are loop L4.

Belongs to the peptidase C14A family. As to quaternary structure, heterotetramer that consists of two anti-parallel arranged heterodimers, each one formed by a 20 kDa (p20) and a 11 kDa (p11) subunit. In terms of processing, cleavage by different proteases, such as granzyme B (GZMB), caspase-1 (CASP1), caspase-8 (CASP8) or caspase-9 (CASP9) generate the two active subunits. Its involvement in different programmed cell death processes is probably specified by the protease that activates CASP7. Cleaved and activated by initiator caspases (CASP8 and/or CASP9), leading to execution phase of apoptosis. Cleavage and maturation by GZMB regulates granzyme-mediated programmed cell death. Cleaved and activated by CASP1 in response to bacterial infection.

Its subcellular location is the cytoplasm. The protein resides in the cytosol. The protein localises to the nucleus. It is found in the secreted. It localises to the extracellular space. The catalysed reaction is Strict requirement for an Asp residue at position P1 and has a preferred cleavage sequence of Asp-Glu-Val-Asp-|-.. With respect to regulation, during activation, the N-terminal disordered prodomain is removed by cleavage. Concomitantly, double cleavage gives rise to a large Caspase-7 subunit p20 and a small Caspase-7 subunit p11. The two large and two small subunits then assemble to form the active CASP7 complex. Can be cleaved and activated by different caspases, depending on the context. Cleaved and activated by initiator caspases (CASP8 and/or CASP9), leading to execution phase of apoptosis. Cleavage and maturation by GZMB regulates granzyme-mediated programmed cell death. Cleavage and maturation by CASP1 regulates pyroptosis. Inhibited by BIRC6; following inhibition of BIRC6-caspase binding by DIABLO/SMAC, BIRC6 is subjected to caspase cleavage, leading to an increase in active caspases. In terms of biological role, thiol protease involved in different programmed cell death processes, such as apoptosis, pyroptosis or granzyme-mediated programmed cell death, by proteolytically cleaving target proteins. Has a marked preference for Asp-Glu-Val-Asp (DEVD) consensus sequences, with some plasticity for alternate non-canonical sequences. Its involvement in the different programmed cell death processes is probably determined by upstream proteases that activate CASP7. Acts as an effector caspase involved in the execution phase of apoptosis: following cleavage and activation by initiator caspases (CASP8 and/or CASP9), mediates execution of apoptosis by catalyzing cleavage of proteins. Compared to CASP3, acts as a minor executioner caspase and cleaves a limited set of target proteins. Acts as a key regulator of the inflammatory response in response to bacterial infection by catalyzing cleavage and activation of the sphingomyelin phosphodiesterase SMPD1 in the extracellular milieu, thereby promoting membrane repair. Cleaves BIRC6 following inhibition of BIRC6-caspase binding by DIABLO/SMAC. The polypeptide is Caspase-7 (Gallus gallus (Chicken)).